Reading from the N-terminus, the 395-residue chain is Chalcone synthase (395 aa).

Residue Cys169 is part of the active site.

Belongs to the thiolase-like superfamily. Chalcone/stilbene synthases family.

It carries out the reaction (E)-4-coumaroyl-CoA + 3 malonyl-CoA + 3 H(+) = 2',4,4',6'-tetrahydroxychalcone + 3 CO2 + 4 CoA. It participates in secondary metabolite biosynthesis; flavonoid biosynthesis. Functionally, the primary product of this enzyme is 4,2',4',6'-tetrahydroxychalcone (also termed naringenin-chalcone or chalcone) which can under specific conditions spontaneously isomerize into naringenin. The protein is Chalcone synthase (CHS) of Pinus strobus (Eastern white pine).